The primary structure comprises 512 residues: Ribonuclease Y (512 aa).

The helical transmembrane segment at F3–I23 threads the bilayer. Residues T202–L265 enclose the KH domain. An HD domain is found at V328–A421.

This sequence belongs to the RNase Y family.

The protein resides in the cell membrane. Functionally, endoribonuclease that initiates mRNA decay. In Desulforamulus reducens (strain ATCC BAA-1160 / DSM 100696 / MI-1) (Desulfotomaculum reducens), this protein is Ribonuclease Y.